We begin with the raw amino-acid sequence, 1021 residues long: Sodium/potassium-transporting ATPase subunit alpha-1 (1021 aa).

The propeptide occupies 1–5 (MGKGV). Residues 1 to 11 (MGKGVGRDKYE) show a composition bias toward basic and acidic residues. Residues 1–36 (MGKGVGRDKYEPAAVSEHGDKKKAKKERDMDELKKE) are disordered. Topologically, residues 6 to 85 (GRDKYEPAAV…NALTPPPTTP (80 aa)) are cytoplasmic. Position 9 is an N6-acetyllysine (Lys-9). At Tyr-10 the chain carries Phosphotyrosine. Phosphoserine; by PKC is present on Ser-16. At Lys-21 the chain carries N6-acetyllysine. Basic and acidic residues predominate over residues 26 to 36 (KERDMDELKKE). Phosphoserine is present on residues Ser-38 and Ser-45. Positions 80–82 (PPP) are phosphoinositide-3 kinase binding. The helical transmembrane segment at 86–106 (EWVKFCRQLFGGFSMLLWIGA) threads the bilayer. Residues 107–129 (VLCFLAYGIQAATEEEPQNDNLY) are Extracellular-facing. The chain crosses the membrane as a helical span at residues 130 to 150 (LGVVLSAVVIITGCFSYYQEA). Residues 151-286 (KSSKIMESFK…GGQTPIAAEI (136 aa)) are Cytoplasmic-facing. A Phosphoserine modification is found at Ser-226. Position 258 is a phosphotyrosine (Tyr-258). A helical transmembrane segment spans residues 287 to 306 (EHFIHIITGVAVFLGVSFFI). The Extracellular segment spans residues 307–318 (LSLILEYTWLEA). A helical membrane pass occupies residues 319 to 336 (VIFLIGIIVANVPEGLLA). Residues 337-770 (TVTVCLTLTA…EEGRLIFDNL (434 aa)) lie on the Cytoplasmic side of the membrane. Residue Asp-374 is the 4-aspartylphosphate intermediate of the active site. A phosphoserine mark is found at Ser-450 and Ser-482. Residue Lys-485 participates in ATP binding. At Tyr-540 the chain carries Phosphotyrosine. The tract at residues 594-715 (RAAVPDAVGK…QGAIVAVTGD (122 aa)) is mediates interaction with SCN7A. Ser-666 carries the post-translational modification Phosphoserine. Mg(2+) is bound by residues Asp-715 and Asp-719. Residues 771-790 (KKSIAYTLTSNIPEITPFLI) form a helical membrane-spanning segment. The Extracellular segment spans residues 791-800 (FIIANIPLPL). The helical transmembrane segment at 801–821 (GTVTILCIDLGTDMVPAISLA) threads the bilayer. The Cytoplasmic portion of the chain corresponds to 822–841 (YEQAESDIMKRQPRNPQTDK). A helical transmembrane segment spans residues 842–864 (LVNERLISMAYGQIGMIQALGGF). The Extracellular portion of the chain corresponds to 865–916 (FTYFVIMAENGFLPNHLLGIRVTWDDRWINDVEDSYGQQWTYEQRKIVEFTC). Residues 917–936 (HTAFFVSIVVVQWADLVICK) traverse the membrane as a helical segment. The Cytoplasmic portion of the chain corresponds to 937 to 949 (TRRNSVFQQGMKN). Ser-941 bears the Phosphoserine; by PKA mark. A helical membrane pass occupies residues 950 to 968 (KILIFGLFEETALAAFLSY). Over 969–983 (CPGMGVALRMYPLKP) the chain is Extracellular. The helical transmembrane segment at 984–1004 (TWWFCAFPYSLLIFVYDEVRK) threads the bilayer. Over 1005–1021 (LIIRRRPGGWVEKETYY) the chain is Cytoplasmic.

Belongs to the cation transport ATPase (P-type) (TC 3.A.3) family. Type IIC subfamily. In terms of assembly, the sodium/potassium-transporting ATPase is composed of a catalytic alpha subunit, an auxiliary non-catalytic beta subunit and an additional regulatory subunit. Interacts with regulatory subunit FXYD1. Interacts with regulatory subunit FXYD3. Interacts with SIK1. Interacts with SLC35G1 and STIM1. Interacts with CLN3; this interaction regulates the sodium/potassium-transporting ATPase complex localization at the plasma membrane. Interacts with SCN7A; activates ATP1A1 P-type sodium:potassium-exchanging transporter activity which indirectly signals to nearby neurons to regulate sodium homeostasis. Post-translationally, phosphorylation on Tyr-10 modulates pumping activity. Phosphorylation of Ser-941 by PKA modulates the response of ATP1A1 to PKC. Dephosphorylation by protein phosphatase 2A (PP2A) following increases in intracellular sodium, leading to increase catalytic activity.

It localises to the cell membrane. The protein localises to the basolateral cell membrane. It is found in the sarcolemma. Its subcellular location is the cell projection. The protein resides in the axon. It localises to the melanosome. The catalysed reaction is K(+)(out) + Na(+)(in) + ATP + H2O = K(+)(in) + Na(+)(out) + ADP + phosphate + H(+). Specifically inhibited by cardiac glycosides such as digoxin or ouabain. Functionally, this is the catalytic component of the active enzyme, which catalyzes the hydrolysis of ATP coupled with the exchange of sodium and potassium ions across the plasma membrane. This action creates the electrochemical gradient of sodium and potassium ions, providing the energy for active transport of various nutrients. Could also be part of an osmosensory signaling pathway that senses body-fluid sodium levels and controls salt intake behavior as well as voluntary water intake to regulate sodium homeostasis. The protein is Sodium/potassium-transporting ATPase subunit alpha-1 (ATP1A1) of Ovis aries (Sheep).